Here is a 507-residue protein sequence, read N- to C-terminus: Maturase K (507 aa).

It belongs to the intron maturase 2 family. MatK subfamily.

Its subcellular location is the plastid. The protein resides in the chloroplast. Functionally, usually encoded in the trnK tRNA gene intron. Probably assists in splicing its own and other chloroplast group II introns. This chain is Maturase K, found in Cananga odorata (Ylang-ylang tree).